A 218-amino-acid polypeptide reads, in one-letter code: MSLTQQQKDLIFGSLLGDGNLQTGSVGRTWRYRALHKSEHQTYLFHKYEILKPLCGENTLPTESIVFDERTNKEVKRWFFNTLTNPSLKFFADMFYTYDQNTQKWVKDVPVKVQTFLTPQALAYFYIDDGALKWLNKSNAMQICTESFSQGGTIRIQKALKTLYNIDTTLTKKTLQDGRIGYRIAIPEASSGAFREVIKPFLVDCMRYKVSDGNKGHL.

Belongs to the LAGLIDADG endonuclease family.

Its subcellular location is the plastid. It is found in the chloroplast. In terms of biological role, probable endonuclease involved in intron homing. Encoded in the group-I intron of the subunit rRNA-encoding gene (rrnL), it generates a staggered cut with 4-nt (CTCG) 3'-OH overhangs 2 bp downstream from the intron insertion site. In Chlamydomonas applanata (Chlamydomonas humicola), this protein is DNA endonuclease I-ChuI.